The sequence spans 348 residues: Chloroacetanilide N-alkylformylase, oxygenase component (348 aa).

Residues 7–108 (WYAVAWCDEV…ARERHKLIWA (102 aa)) form the Rieske domain. [2Fe-2S] cluster contacts are provided by cysteine 47, histidine 49, cysteine 66, and histidine 69. The Fe cation site is built by histidine 159 and histidine 164. A substrate-binding site is contributed by histidine 250. Aspartate 293 contacts Fe cation.

The chloroacetanilide N-alkylformylase multicomponent enzyme system is composed of an oxygenase component (CndA) and an electron transfer component formed by a ferredoxin reductase (CndC1) and a ferredoxin (CndB1). In vitro, chloroacetanilide N-alkylformylase assays in which CndB1 is substituted for CndB2 demonstrate that the two enzymes possess nearly identical activities. The cofactor is [2Fe-2S] cluster.

It carries out the reaction butachlor + 2 reduced [2Fe-2S]-[ferredoxin] + O2 + 2 H(+) = butyl formate + N-(2,6-diethylphenyl)-2-chloroacetamide + 2 oxidized [2Fe-2S]-[ferredoxin] + H2O. The enzyme catalyses alachlor + 2 reduced [2Fe-2S]-[ferredoxin] + O2 + 2 H(+) = methyl formate + N-(2,6-diethylphenyl)-2-chloroacetamide + 2 oxidized [2Fe-2S]-[ferredoxin] + H2O. The catalysed reaction is acetochlor + 2 reduced [2Fe-2S]-[ferredoxin] + O2 + 2 H(+) = N-(2-ethyl-6-methylphenyl)-2-chloroacetamide + ethyl formate + 2 oxidized [2Fe-2S]-[ferredoxin] + H2O. Its activity is regulated as follows. Activity enhanced by Fe(2+) and Mg(2+) ions. Divalent cations such as Ca(2+), Cr(2+), Co(2+), and Mn(2+) show moderate inhibition of the enzyme, whereas heavy metal ions such as Ag(+), Cu(2+), Pb(2+), Hg(2+), Ni(2+) and Zn(2+) severely inhibit the activity. Its function is as follows. Component of the chloroacetanilide N-alkylformylase multicomponent enzyme system involved in the degradation of chloroacetanilide herbicides (N-alkoxyalkyl-N-chloroacetyl-substituted aniline derivatives). In vitro, catalyzes the N-dealkylation of butachlor, alachlor and acetochlor to yield 2-chloro-N-(2,6-diethylphenyl)acetamide (CDEPA) (for alachlor and butachlor) and 2-chloro-N-(2-methyl-6-ethylphenyl)acetamide (CMEPA) (for acetochlor). The protein is Chloroacetanilide N-alkylformylase, oxygenase component of Rhizorhabdus wittichii (strain DC-6 / KACC 16600) (Sphingomonas wittichii).